Here is a 961-residue protein sequence, read N- to C-terminus: Mitogen-activated protein kinase kinase kinase 13-A (961 aa).

The interval Leu-88–Arg-118 is disordered. Positions Ile-169–Ile-410 constitute a Protein kinase domain. Residues Leu-175 to Val-183 and Lys-196 contribute to the ATP site. The active-site Proton acceptor is the Asp-280. 2 leucine-zipper regions span residues Val-434 to Leu-455 and Leu-487 to Val-508. Residues Arg-458 to Arg-497 adopt a coiled-coil conformation. 3 disordered regions span residues Pro-513 to Ser-600, Ala-615 to Tyr-637, and Arg-799 to Asp-883. The span at Ser-560–Ser-578 shows a compositional bias: low complexity. The segment covering Asn-584 to Asn-596 has biased composition (basic residues). A compositionally biased stretch (acidic residues) spans Glu-810–Val-823. Residues Ser-811–Glu-824 form an acidic region. Positions Lys-837–Val-851 are enriched in polar residues.

This sequence belongs to the protein kinase superfamily. Ser/Thr protein kinase family.

It localises to the cytoplasm. It is found in the membrane. It carries out the reaction L-seryl-[protein] + ATP = O-phospho-L-seryl-[protein] + ADP + H(+). It catalyses the reaction L-threonyl-[protein] + ATP = O-phospho-L-threonyl-[protein] + ADP + H(+). In terms of biological role, may have a role in the JNK signaling pathway. In Xenopus laevis (African clawed frog), this protein is Mitogen-activated protein kinase kinase kinase 13-A (map3k13-a).